A 428-amino-acid polypeptide reads, in one-letter code: YTH domain-containing protein ECT1 (428 aa).

In terms of domain architecture, YTH spans 245–382 (AKFFVIKSYS…EHGTKIIKIF (138 aa)). RNA contacts are provided by residues 251 to 253 (KSY), aspartate 257, 267 to 268 (WS), asparagine 300, tryptophan 324, tryptophan 329, and tryptophan 337.

Interacts (via C-terminus) with CIPK1. Expressed in root apex, shoot apex, lateral root primordia, stamens, carpels and trichomes.

Its subcellular location is the nucleus. It is found in the cytoplasm. Specifically recognizes and binds N6-methyladenosine (m6A)-containing RNAs, and regulates mRNA stability. M6A is a modification present at internal sites of mRNAs and some non-coding RNAs and plays a role in mRNA stability and processing. The chain is YTH domain-containing protein ECT1 from Arabidopsis thaliana (Mouse-ear cress).